Reading from the N-terminus, the 363-residue chain is 3-dehydroquinate synthase (363 aa).

Residues 109–113 (GATTD), 133–134 (TT), Lys-146, and Lys-155 contribute to the NAD(+) site. Positions 188, 251, and 267 each coordinate Zn(2+).

The protein belongs to the sugar phosphate cyclases superfamily. Dehydroquinate synthase family. NAD(+) serves as cofactor. It depends on Co(2+) as a cofactor. Zn(2+) is required as a cofactor.

It is found in the cytoplasm. The enzyme catalyses 7-phospho-2-dehydro-3-deoxy-D-arabino-heptonate = 3-dehydroquinate + phosphate. The protein operates within metabolic intermediate biosynthesis; chorismate biosynthesis; chorismate from D-erythrose 4-phosphate and phosphoenolpyruvate: step 2/7. In terms of biological role, catalyzes the conversion of 3-deoxy-D-arabino-heptulosonate 7-phosphate (DAHP) to dehydroquinate (DHQ). The sequence is that of 3-dehydroquinate synthase from Streptomyces avermitilis (strain ATCC 31267 / DSM 46492 / JCM 5070 / NBRC 14893 / NCIMB 12804 / NRRL 8165 / MA-4680).